A 352-amino-acid polypeptide reads, in one-letter code: N-acetyl-gamma-glutamyl-phosphate reductase (352 aa).

Cys-156 is an active-site residue.

The protein belongs to the NAGSA dehydrogenase family. Type 1 subfamily.

It is found in the cytoplasm. The catalysed reaction is N-acetyl-L-glutamate 5-semialdehyde + phosphate + NADP(+) = N-acetyl-L-glutamyl 5-phosphate + NADPH + H(+). Its pathway is amino-acid biosynthesis; L-arginine biosynthesis; N(2)-acetyl-L-ornithine from L-glutamate: step 3/4. Functionally, catalyzes the NADPH-dependent reduction of N-acetyl-5-glutamyl phosphate to yield N-acetyl-L-glutamate 5-semialdehyde. In Afipia carboxidovorans (strain ATCC 49405 / DSM 1227 / KCTC 32145 / OM5) (Oligotropha carboxidovorans), this protein is N-acetyl-gamma-glutamyl-phosphate reductase.